Reading from the N-terminus, the 101-residue chain is Ubiquitin-related modifier 1 (101 aa).

G101 is modified (1-thioglycine). G101 participates in a covalent cross-link: Glycyl lysine isopeptide (Gly-Lys) (interchain with K-? in acceptor proteins).

This sequence belongs to the URM1 family. C-terminal thiocarboxylation occurs in 2 steps, it is first acyl-adenylated (-COAMP) via the hesA/moeB/thiF part of UBA4, then thiocarboxylated (-COSH) via the rhodanese domain of UBA4.

Its subcellular location is the cytoplasm. Its pathway is tRNA modification; 5-methoxycarbonylmethyl-2-thiouridine-tRNA biosynthesis. Acts as a sulfur carrier required for 2-thiolation of mcm(5)S(2)U at tRNA wobble positions of cytosolic tRNA(Lys), tRNA(Glu) and tRNA(Gln). Serves as sulfur donor in tRNA 2-thiolation reaction by being thiocarboxylated (-COSH) at its C-terminus by the MOCS3 homolog UBA4. The sulfur is then transferred to tRNA to form 2-thiolation of mcm(5)S(2)U. Prior mcm(5) tRNA modification by the elongator complex is required for 2-thiolation. Also acts as a ubiquitin-like protein (UBL) that is covalently conjugated via an isopeptide bond to lysine residues of target proteins such as AHP1. The thiocarboxylated form serves as substrate for conjugation and oxidative stress specifically induces the formation of UBL-protein conjugates. This is Ubiquitin-related modifier 1 from Debaryomyces hansenii (strain ATCC 36239 / CBS 767 / BCRC 21394 / JCM 1990 / NBRC 0083 / IGC 2968) (Yeast).